We begin with the raw amino-acid sequence, 202 residues long: Glycerol-3-phosphate acyltransferase (202 aa).

5 helical membrane-spanning segments follow: residues 6-26 (LTLG…AVLV), 56-76 (SAAL…YIAF), 82-102 (SVSL…PIFF), 118-138 (APIG…MVLI), and 141-161 (YSSL…WYLD).

The protein belongs to the PlsY family. As to quaternary structure, probably interacts with PlsX.

The protein resides in the cell inner membrane. It carries out the reaction an acyl phosphate + sn-glycerol 3-phosphate = a 1-acyl-sn-glycero-3-phosphate + phosphate. Its pathway is lipid metabolism; phospholipid metabolism. Its function is as follows. Catalyzes the transfer of an acyl group from acyl-phosphate (acyl-PO(4)) to glycerol-3-phosphate (G3P) to form lysophosphatidic acid (LPA). This enzyme utilizes acyl-phosphate as fatty acyl donor, but not acyl-CoA or acyl-ACP. The chain is Glycerol-3-phosphate acyltransferase from Shewanella woodyi (strain ATCC 51908 / MS32).